The following is a 178-amino-acid chain: Extracellular fatty acid-binding protein (178 aa).

The signal sequence occupies residues 1–20; it reads MRTLALSLGLALLCLLHAKA. Thr-43 lines the enterobactin pocket. 1-tetradecanoyl-sn-glycerol 3-phosphate contacts are provided by Tyr-72 and Lys-104. Cys-80 and Cys-173 form a disulfide bridge. Enterobactin contacts are provided by Lys-104, Arg-123, and Arg-134. A 1-tetradecanoyl-sn-glycerol 3-phosphate-binding site is contributed by 134 to 136; it reads RLY.

Belongs to the calycin superfamily. Lipocalin family. In terms of assembly, monomer.

It is found in the secreted. Siderocalin-like lipocalin tightly binding a variety of bacterial ferric siderophores, also binds long-chain unsaturated fatty acids such as linoleic acid, oleic acid, arachidonic acid and, with a lower affinity, long chain saturated fatty acids such as steraic acid. May act as an antibacterial factor, through dual ligand specificity, both as a siderophore-sequestrating molecule and a lysophosphatidic acid (LPA) sensor. The chain is Extracellular fatty acid-binding protein from Coturnix japonica (Japanese quail).